A 537-amino-acid polypeptide reads, in one-letter code: MAKQIIFGEKVRVSLKKGVDTLANTVRVTLGPKGHPVALERKWGAPTVIDDGVTIARDIELPDAFENMGAQLVKEAATRTSDAAGDGTTTSIVLAQALINEAFKNIAAGAEPINLKRGIEKAVAALKAQLRKNSTPVKGKQQIVQVATITGKDPEIGNLIADVMDKVGKDGVITIEESRGLRYETSYVEGMQFDRGYISAYFVTDPGRMESVMEDATILMTDRKIETVAELLPALEKILQISKNLVIVAENVEAEALATLVVNKLRGNLNILAVKAPGYGDRQKAMLEDMAILTGGHVISKEAGRKLDSVTEADLGHARRIVSNKDKTTIIDGEGSAEAIKDRIKQIKAQIEETESAFDREKLQERQAALVGGVAVIAVGAATETEMKERKARVEDALAATRAAIEEGILPGGGTGLLNALPCLDALKLEGDEATGVNIVRKALIEPVRWIATNAGKDGNVIVDKVKNSPVGHGYNAENDVFGDMAEMGIIDPTMVVRSALENAASIANMVLITDSLVADIQEKAPAAPGPEAAGMY.

Residues 29–32, 86–90, Gly413, and Asp492 contribute to the ATP site; these read TLGP and DGTTT.

The protein belongs to the chaperonin (HSP60) family. In terms of assembly, forms a cylinder of 14 subunits composed of two heptameric rings stacked back-to-back. Interacts with the co-chaperonin GroES.

Its subcellular location is the cytoplasm. The enzyme catalyses ATP + H2O + a folded polypeptide = ADP + phosphate + an unfolded polypeptide.. Its function is as follows. Together with its co-chaperonin GroES, plays an essential role in assisting protein folding. The GroEL-GroES system forms a nano-cage that allows encapsulation of the non-native substrate proteins and provides a physical environment optimized to promote and accelerate protein folding. The chain is Chaperonin GroEL from Dehalococcoides mccartyi (strain ATCC BAA-2100 / JCM 16839 / KCTC 5957 / BAV1).